Consider the following 249-residue polypeptide: Elongation factor Ts (249 aa).

An involved in Mg(2+) ion dislocation from EF-Tu region spans residues 82-85 (TDFV). The disordered stretch occupies residues 215-249 (QAGQLAPEAESTTETADATSETTTEKSSAKKKKKK). A compositionally biased stretch (low complexity) spans 222-236 (EAESTTETADATSET).

It belongs to the EF-Ts family.

It localises to the cytoplasm. Its function is as follows. Associates with the EF-Tu.GDP complex and induces the exchange of GDP to GTP. It remains bound to the aminoacyl-tRNA.EF-Tu.GTP complex up to the GTP hydrolysis stage on the ribosome. In Rippkaea orientalis (strain PCC 8801 / RF-1) (Cyanothece sp. (strain PCC 8801)), this protein is Elongation factor Ts.